Consider the following 454-residue polypeptide: tRNA modification GTPase MnmE (454 aa).

(6S)-5-formyl-5,6,7,8-tetrahydrofolate is bound by residues Arg23, Glu80, and Lys120. Residues 216-377 (GMKVVIAGRP…LRNNLKQSMG (162 aa)) form the TrmE-type G domain. Residue Asn226 coordinates K(+). GTP-binding positions include 226–231 (NAGKSS), 245–251 (TDIAGTT), 270–273 (DTAG), 335–338 (NKAD), and 358–360 (SAR). Mg(2+) is bound at residue Ser230. The K(+) site is built by Thr245, Ile247, and Thr250. Position 251 (Thr251) interacts with Mg(2+). A (6S)-5-formyl-5,6,7,8-tetrahydrofolate-binding site is contributed by Lys454.

Belongs to the TRAFAC class TrmE-Era-EngA-EngB-Septin-like GTPase superfamily. TrmE GTPase family. Homodimer. Heterotetramer of two MnmE and two MnmG subunits. K(+) serves as cofactor.

It is found in the cytoplasm. Exhibits a very high intrinsic GTPase hydrolysis rate. Involved in the addition of a carboxymethylaminomethyl (cmnm) group at the wobble position (U34) of certain tRNAs, forming tRNA-cmnm(5)s(2)U34. This chain is tRNA modification GTPase MnmE, found in Salmonella paratyphi A (strain AKU_12601).